The primary structure comprises 339 residues: Fe-S cluster assembly protein DRE2 (339 aa).

The segment at 1–157 (MTRILLLLHP…KKLSSTHAAV (157 aa)) is N-terminal SAM-like domain. Positions 158–206 (GLTDTSASNTDEENDDVNSKRKLQETKLAYFSESDDEDEEDQIIDENNL) are linker. C221, C233, C236, and C238 together coordinate [2Fe-2S] cluster. Residues 221 to 238 (CELPNGKKRRKACKDCTC) are fe-S binding site A. The [4Fe-4S] cluster site is built by C302, C305, C313, and C316. 2 consecutive short sequence motifs (cx2C motif) follow at residues 302 to 305 (CSSC) and 313 to 316 (CDGC). A fe-S binding site B region spans residues 302 to 316 (CSSCSLGDAFRCDGC).

The protein belongs to the anamorsin family. In terms of assembly, monomer. Interacts with TAH18. Interacts with MIA40. The cofactor is [2Fe-2S] cluster. [4Fe-4S] cluster is required as a cofactor.

It localises to the cytoplasm. The protein resides in the mitochondrion intermembrane space. Component of the cytosolic iron-sulfur (Fe-S) protein assembly (CIA) machinery required for the maturation of extramitochondrial Fe-S proteins. Part of an electron transfer chain functioning in an early step of cytosolic Fe-S biogenesis, facilitating the de novo assembly of a [4Fe-4S] cluster on the scaffold complex CFD1-NBP35. Electrons are transferred to DRE2 from NADPH via the FAD- and FMN-containing protein TAH18. TAH18-DRE2 are also required for the assembly of the diferric tyrosyl radical cofactor of ribonucleotide reductase (RNR), probably by providing electrons for reduction during radical cofactor maturation in the catalytic small subunit RNR2. This chain is Fe-S cluster assembly protein DRE2, found in Debaryomyces hansenii (strain ATCC 36239 / CBS 767 / BCRC 21394 / JCM 1990 / NBRC 0083 / IGC 2968) (Yeast).